Here is a 205-residue protein sequence, read N- to C-terminus: Proteasome subunit beta type-3 (205 aa).

An N-acetylserine modification is found at serine 2. Lysine 77 is modified (N6-acetyllysine).

It belongs to the peptidase T1B family. As to quaternary structure, the 26S proteasome consists of a 20S proteasome core and two 19S regulatory subunits. The 20S proteasome core is a barrel-shaped complex made of 28 subunits that are arranged in four stacked rings. The two outer rings are each formed by seven alpha subunits, and the two inner rings are formed by seven beta subunits. The proteolytic activity is exerted by three beta-subunits PSMB5, PSMB6 and PSMB7. (Microbial infection) Interacts with HIV-1 TAT protein.

Its subcellular location is the cytoplasm. The protein localises to the nucleus. In terms of biological role, non-catalytic component of the 20S core proteasome complex involved in the proteolytic degradation of most intracellular proteins. This complex plays numerous essential roles within the cell by associating with different regulatory particles. Associated with two 19S regulatory particles, forms the 26S proteasome and thus participates in the ATP-dependent degradation of ubiquitinated proteins. The 26S proteasome plays a key role in the maintenance of protein homeostasis by removing misfolded or damaged proteins that could impair cellular functions, and by removing proteins whose functions are no longer required. Associated with the PA200 or PA28, the 20S proteasome mediates ubiquitin-independent protein degradation. This type of proteolysis is required in several pathways including spermatogenesis (20S-PA200 complex) or generation of a subset of MHC class I-presented antigenic peptides (20S-PA28 complex). This Homo sapiens (Human) protein is Proteasome subunit beta type-3.